Consider the following 29-residue polypeptide: Cyclotide mobo-B (29 aa).

Positions 1 to 29 (GKPICGETCAKGKCYTPKCTCNWPICYKN) form a cross-link, cyclopeptide (Gly-Asn). 3 cysteine pairs are disulfide-bonded: Cys5–Cys19, Cys9–Cys21, and Cys14–Cys26.

It belongs to the cyclotide family. In terms of processing, this is a cyclic peptide.

Its function is as follows. Probably participates in a plant defense mechanism. The protein is Cyclotide mobo-B of Melicytus obovatus (Hymenanthera obovata).